Consider the following 283-residue polypeptide: BTB/POZ domain-containing protein KCTD15 (283 aa).

Positions 1 to 32 are disordered; it reads MPHRKERPSGSSLHTHGSTGTAEGGNMSRLSL. Positions 9 to 21 are enriched in low complexity; the sequence is SGSSLHTHGSTGT. Phosphoserine occurs at positions 31, 35, and 38. Positions 56-126 constitute a BTB domain; that stretch reads APVHIDVGGH…LRTSKLLLPD (71 aa).

Forms oligomers, predominantly homopentamers. Interacts with KCTD1, probably forming heteropentamers depending on its abundance in a cell-type dependent manner. Interacts with TFAP2A; this interaction inhibits TFAP2A transcriptional activation.

Its subcellular location is the nucleus. During embryonic development, it is involved in neural crest formation. Inhibits AP2 transcriptional activity by interaction with its activation domain. This Homo sapiens (Human) protein is BTB/POZ domain-containing protein KCTD15 (KCTD15).